We begin with the raw amino-acid sequence, 64 residues long: Large ribosomal subunit protein eL37 (64 aa).

Zn(2+) is bound by residues Cys-20, Cys-23, Cys-35, and Cys-38. Residues 20–38 (CRRCGRRAFHVRKKVCAAC) form a C4-type zinc finger.

Belongs to the eukaryotic ribosomal protein eL37 family. The cofactor is Zn(2+).

In terms of biological role, binds to the 23S rRNA. This Methanococcus maripaludis (strain DSM 14266 / JCM 13030 / NBRC 101832 / S2 / LL) protein is Large ribosomal subunit protein eL37.